Reading from the N-terminus, the 126-residue chain is Fluoride-specific ion channel FluC (126 aa).

Helical transmembrane passes span 4-24 (LLLV…TSAW), 36-56 (GTLL…TASL), 67-85 (LFLA…SFNY), and 101-121 (AYLL…TLLV). Na(+) is bound by residues glycine 75 and threonine 78.

This sequence belongs to the fluoride channel Fluc/FEX (TC 1.A.43) family.

It is found in the cell inner membrane. The enzyme catalyses fluoride(in) = fluoride(out). Its activity is regulated as follows. Na(+) is not transported, but it plays an essential structural role and its presence is essential for fluoride channel function. Functionally, fluoride-specific ion channel. Important for reducing fluoride concentration in the cell, thus reducing its toxicity. This is Fluoride-specific ion channel FluC from Anaeromyxobacter sp. (strain K).